The chain runs to 263 residues: Putative hydro-lyase Psyc_1103 (263 aa).

The protein belongs to the D-glutamate cyclase family.

In Psychrobacter arcticus (strain DSM 17307 / VKM B-2377 / 273-4), this protein is Putative hydro-lyase Psyc_1103.